The sequence spans 403 residues: Serine/threonine transporter SstT (403 aa).

A run of 9 helical transmembrane segments spans residues 14–34 (VTQI…APAI), 44–64 (VFVS…VMAS), 79–99 (ILWL…VASM), 138–158 (ALLN…GVAL), 175–195 (GVTL…FGLV), 214–234 (LAVL…LIVF), 295–315 (MAGA…TLGI), 327–347 (VVAA…LLLI), and 353–373 (LFGI…IIGV).

It belongs to the dicarboxylate/amino acid:cation symporter (DAACS) (TC 2.A.23) family.

Its subcellular location is the cell inner membrane. The enzyme catalyses L-serine(in) + Na(+)(in) = L-serine(out) + Na(+)(out). The catalysed reaction is L-threonine(in) + Na(+)(in) = L-threonine(out) + Na(+)(out). Involved in the import of serine and threonine into the cell, with the concomitant import of sodium (symport system). The protein is Serine/threonine transporter SstT of Pseudomonas putida (strain ATCC 700007 / DSM 6899 / JCM 31910 / BCRC 17059 / LMG 24140 / F1).